The following is a 327-amino-acid chain: Poly(ribitol-phosphate) beta-N-acetylglucosaminyltransferase TarP (327 aa).

UDP-N-acetyl-alpha-D-glucosamine-binding positions include P9, D41, N68, R76, and 92 to 94 (DSD). Mn(2+) is bound at residue D94. The active-site Proton acceptor is the D181.

The protein belongs to the glycosyltransferase 2 family. Homotrimer. The cofactor is Mn(2+).

The catalysed reaction is 4-O-[(D-ribitylphospho)(n)-di{(2R)-glycerylphospho}]-N-acetyl-beta-D-mannosaminyl-(1-&gt;4)-N-acetyl-alpha-D-glucosaminyl di-trans,octa-cis-undecaprenyl diphosphate + n UDP-N-acetyl-alpha-D-glucosamine = 4-O-([3-N-acetyl-beta-D-glucosaminyl-1-D-ribitylphospho](n)-di{[2R]-1-glycerylphospho})-N-acetyl-beta-D-mannosaminyl-(1-&gt;4)-N-acetyl-alpha-D-glucosaminyl di-trans,octa-cis-undecaprenyl diphosphate + n UDP + n H(+). It functions in the pathway cell wall biogenesis; poly(ribitol phosphate) teichoic acid biosynthesis. Its function is as follows. Attaches beta-O-GlcNAc (beta-O-N-acetyl-D-glucosamine) residues to the C3 position of poly(RboP)-wall teichoic acids (WTAs). Attenuates immunogenicity of WTA and protects S.aureus against adaptative host defenses by allowing bacteria to evade recognition by preexisting anti-S.aureus antibodies. Also protects the cell from podophage infection. This Staphylococcus aureus (strain N315) protein is Poly(ribitol-phosphate) beta-N-acetylglucosaminyltransferase TarP.